The primary structure comprises 765 residues: Probable dehydratase PflD (765 aa).

The 635-residue stretch at 3 to 637 folds into the PFL domain; it reads NRISRLKTAL…VVGATPDGRF (635 aa). The Glycine radical domain occupies 645–765; sequence GGLSPMLGQD…DIIRRTAHQL (121 aa). A Glycine radical modification is found at glycine 741.

Belongs to the glycyl radical enzyme (GRE) family.

Functionally, probably shows dehydratase activity. This Escherichia coli (strain K12) protein is Probable dehydratase PflD (pflD).